Here is a 162-residue protein sequence, read N- to C-terminus: Ribosome maturation factor RimP (162 aa).

It belongs to the RimP family.

The protein localises to the cytoplasm. Functionally, required for maturation of 30S ribosomal subunits. In Cupriavidus taiwanensis (strain DSM 17343 / BCRC 17206 / CCUG 44338 / CIP 107171 / LMG 19424 / R1) (Ralstonia taiwanensis (strain LMG 19424)), this protein is Ribosome maturation factor RimP.